A 133-amino-acid chain; its full sequence is Ribonuclease P protein component (133 aa).

It belongs to the RnpA family. Consists of a catalytic RNA component (M1 or rnpB) and a protein subunit.

The enzyme catalyses Endonucleolytic cleavage of RNA, removing 5'-extranucleotides from tRNA precursor.. Its function is as follows. RNaseP catalyzes the removal of the 5'-leader sequence from pre-tRNA to produce the mature 5'-terminus. It can also cleave other RNA substrates such as 4.5S RNA. The protein component plays an auxiliary but essential role in vivo by binding to the 5'-leader sequence and broadening the substrate specificity of the ribozyme. The chain is Ribonuclease P protein component from Paramagnetospirillum magneticum (strain ATCC 700264 / AMB-1) (Magnetospirillum magneticum).